Consider the following 334-residue polypeptide: Cobalt-precorrin-5B C(1)-methyltransferase (334 aa).

The protein belongs to the CbiD family.

The catalysed reaction is Co-precorrin-5B + S-adenosyl-L-methionine = Co-precorrin-6A + S-adenosyl-L-homocysteine. It participates in cofactor biosynthesis; adenosylcobalamin biosynthesis; cob(II)yrinate a,c-diamide from sirohydrochlorin (anaerobic route): step 6/10. In terms of biological role, catalyzes the methylation of C-1 in cobalt-precorrin-5B to form cobalt-precorrin-6A. This chain is Cobalt-precorrin-5B C(1)-methyltransferase, found in Methanoregula boonei (strain DSM 21154 / JCM 14090 / 6A8).